We begin with the raw amino-acid sequence, 551 residues long: Serine/threonine-protein kinase ppk21 (551 aa).

The interval 24 to 43 (EARGERNPVKPQSSNVVPGT) is disordered. The Protein kinase domain maps to 55–315 (YVFGDIIGDG…TQQIKQFPFF (261 aa)). Residues 65-67 (SFS) and Lys84 each bind ATP. Positions 86 to 131 (LDKKYIVKENKVKYVNIERDSMMRLNGFPGISRLFHTFQDDLKLYY) are PIF-pocket. ATP is bound by residues 134 to 136 (ELA) and Glu140. Catalysis depends on Asp179, which acts as the Proton acceptor. Residues Glu183 and Asp197 each coordinate ATP. At Ser220 the chain carries Phosphoserine; by autocatalysis. Ser538 is modified (phosphoserine).

It belongs to the protein kinase superfamily. AGC Ser/Thr protein kinase family. PDPK1 subfamily.

It is found in the cytoplasm. Its subcellular location is the nucleus. The protein resides in the cytoskeleton. The protein localises to the microtubule organizing center. It localises to the spindle pole body. The enzyme catalyses L-seryl-[protein] + ATP = O-phospho-L-seryl-[protein] + ADP + H(+). It carries out the reaction L-threonyl-[protein] + ATP = O-phospho-L-threonyl-[protein] + ADP + H(+). In Schizosaccharomyces pombe (strain 972 / ATCC 24843) (Fission yeast), this protein is Serine/threonine-protein kinase ppk21 (ppk21).